Reading from the N-terminus, the 159-residue chain is Late embryogenesis abundant protein 50 (159 aa).

2 consecutive SMP domains span residues 30-87 (TTLT…RNQK) and 96-151 (NLGD…YKLN).

Belongs to the LEA type SMP family.

It localises to the cytoplasm. It is found in the nucleus. In terms of biological role, LEA proteins are late embryonic proteins abundant in higher plant seed embryos. The function of those proteins is not known. In Arabidopsis thaliana (Mouse-ear cress), this protein is Late embryogenesis abundant protein 50.